Reading from the N-terminus, the 580-residue chain is Trafficking protein particle complex subunit 14 (580 aa).

Disordered regions lie at residues 90-138 (GMPG…ATTL) and 480-533 (VSHP…RSGS). A compositionally biased stretch (gly residues) spans 105–116 (PGGGDPGGGGLF). Over residues 124 to 137 (THGPGPATSGGATT) the composition is skewed to low complexity. S491 carries the phosphoserine modification. Residues 492–502 (RKSSPSSPAVR) are compositionally biased toward low complexity. The span at 512–525 (LGRSQSFSHQQPSR) shows a compositional bias: polar residues. Phosphoserine is present on S517. The residue at position 541 (T541) is a Phosphothreonine. Phosphoserine is present on S546.

Component of the multisubunit TRAPP II complex, which includes at least TRAPPC1, TRAPPC2, TRAPPC2L, TRAPPC3, TRAPPC4, TRAPPC5, TRAPPC6A/B, TRAPPC9, TRAPPC10 and TRAPPC14. TRAPPC9, TRAPPC10 and TRAPPC14 are specific subunits of the TRAPP II complex. Interacts with alpha-tubulin during mitosis. Interacts with RAB3IP (via the N-terminal region); this interaction mediates RAB3IP association with the TRAPP II complex. Interacts with TRAPPC10. Interacts with FBF1. In terms of tissue distribution, broadly expressed. High levels in brain, cerebellum, testis and whole blood.

Its subcellular location is the cytoplasm. The protein resides in the cytoskeleton. The protein localises to the spindle. It is found in the vesicle. It localises to the midbody. Its function is as follows. Specific subunit of the TRAPP (transport protein particle) II complex, a highly conserved vesicle tethering complex that functions in late Golgi trafficking as a membrane tether. TRAPP II complex also has GEF activity toward RAB1A. TRAPPC14 is dispensable for TRAPPII complex integrity but mediates RAB3IP preciliary vesicle trafficking to the mother centriole during ciliogenesis. Modulates YAP1 activity as transcriptional regulator. The polypeptide is Trafficking protein particle complex subunit 14 (Homo sapiens (Human)).